Reading from the N-terminus, the 1215-residue chain is DNA-directed RNA polymerase subunit beta' (1215 aa).

Cys-60, Cys-62, Cys-75, and Cys-78 together coordinate Zn(2+). 3 residues coordinate Mg(2+): Asp-450, Asp-452, and Asp-454. Cys-819, Cys-893, Cys-900, and Cys-903 together coordinate Zn(2+).

This sequence belongs to the RNA polymerase beta' chain family. In terms of assembly, the RNAP catalytic core consists of 2 alpha, 1 beta, 1 beta' and 1 omega subunit. When a sigma factor is associated with the core the holoenzyme is formed, which can initiate transcription. The cofactor is Mg(2+). Zn(2+) serves as cofactor.

It catalyses the reaction RNA(n) + a ribonucleoside 5'-triphosphate = RNA(n+1) + diphosphate. Functionally, DNA-dependent RNA polymerase catalyzes the transcription of DNA into RNA using the four ribonucleoside triphosphates as substrates. The protein is DNA-directed RNA polymerase subunit beta' of Levilactobacillus brevis (strain ATCC 367 / BCRC 12310 / CIP 105137 / JCM 1170 / LMG 11437 / NCIMB 947 / NCTC 947) (Lactobacillus brevis).